The primary structure comprises 246 residues: MEGGSASGSASALSNDENLVVSCEDSSSPIGNELELGLTLSLGRKGYRDCRVYADDSSSSSSSSSLSRASVIAGIKRTADSMAATSGQVVGWPPIRTYRMNSMVNQAKASATEDPNLEISQAVNKNRSDSTKMRNSMFVKVTMDGIPIGRKIDLNAHKCYESLSNTLEEMFLKPKLGSRTLETDGHMETPVKILPDGSSGLVLTYEDKEGDWMLVGDVPWGMFIGSVRRLRIMKTSEATGKAQMIL.

Positions 36–40 (LGLTL) match the EAR-like (transcriptional repression) motif. The PB1 domain occupies 136 to 235 (SMFVKVTMDG…SVRRLRIMKT (100 aa)).

Belongs to the Aux/IAA family. In terms of assembly, homodimers and heterodimers. Interacts with TPL. In terms of tissue distribution, preferentially expressed in stems and flowers.

The protein localises to the nucleus. In terms of biological role, aux/IAA proteins are short-lived transcriptional factors that function as repressors of early auxin response genes at low auxin concentrations. Repression is thought to result from the interaction with auxin response factors (ARFs), proteins that bind to the auxin-responsive promoter element (AuxRE). Formation of heterodimers with ARF proteins may alter their ability to modulate early auxin response genes expression. This Arabidopsis thaliana (Mouse-ear cress) protein is Auxin-responsive protein IAA11 (IAA11).